The following is a 164-amino-acid chain: Large ribosomal subunit protein uL15 (164 aa).

Disordered regions lie at residues 1-49 (MTKL…SIAG) and 143-164 (EKAG…SAEA). A compositionally biased stretch (gly residues) spans 22–36 (RGPGSGKGKTAGRGV).

Belongs to the universal ribosomal protein uL15 family. In terms of assembly, part of the 50S ribosomal subunit.

Functionally, binds to the 23S rRNA. This Phenylobacterium zucineum (strain HLK1) protein is Large ribosomal subunit protein uL15.